Consider the following 446-residue polypeptide: 3-phosphoshikimate 1-carboxyvinyltransferase (446 aa).

3-phosphoshikimate contacts are provided by Lys21, Ser22, and Arg26. Position 21 (Lys21) interacts with phosphoenolpyruvate. The phosphoenolpyruvate site is built by Gly92 and Arg120. Positions 165, 166, 308, and 335 each coordinate 3-phosphoshikimate. Residue Gln166 participates in phosphoenolpyruvate binding. Asp308 acts as the Proton acceptor in catalysis. Phosphoenolpyruvate contacts are provided by Arg339, Arg380, and Lys406.

The protein belongs to the EPSP synthase family. In terms of assembly, monomer.

It is found in the cytoplasm. The enzyme catalyses 3-phosphoshikimate + phosphoenolpyruvate = 5-O-(1-carboxyvinyl)-3-phosphoshikimate + phosphate. It functions in the pathway metabolic intermediate biosynthesis; chorismate biosynthesis; chorismate from D-erythrose 4-phosphate and phosphoenolpyruvate: step 6/7. Functionally, catalyzes the transfer of the enolpyruvyl moiety of phosphoenolpyruvate (PEP) to the 5-hydroxyl of shikimate-3-phosphate (S3P) to produce enolpyruvyl shikimate-3-phosphate and inorganic phosphate. The polypeptide is 3-phosphoshikimate 1-carboxyvinyltransferase (Chlamydia caviae (strain ATCC VR-813 / DSM 19441 / 03DC25 / GPIC) (Chlamydophila caviae)).